Here is a 319-residue protein sequence, read N- to C-terminus: Acetyl esterase (319 aa).

An Involved in the stabilization of the negatively charged intermediate by the formation of the oxyanion hole motif is present at residues 91–93; that stretch reads HGG. Catalysis depends on residues S165, D262, and H292.

It belongs to the 'GDXG' lipolytic enzyme family. Homodimer. Interacts with MalT and MelA.

The protein resides in the cytoplasm. Displays esterase activity towards short chain fatty esters (acyl chain length of up to 8 carbons). Able to hydrolyze triacetylglycerol (triacetin) and tributyrylglycerol (tributyrin), but not trioleylglycerol (triolein) or cholesterol oleate. Negatively regulates MalT activity by antagonizing maltotriose binding. Inhibits MelA galactosidase activity. The polypeptide is Acetyl esterase (Escherichia coli O7:K1 (strain IAI39 / ExPEC)).